We begin with the raw amino-acid sequence, 691 residues long: POU domain, class 6, transcription factor 2 (691 aa).

Disordered regions lie at residues 1–61 (MIAG…RGNT), 188–297 (QQQQ…LQLV), and 435–461 (GQAATSHSPVRQASSSSSSSSSSSALS). The segment covering 17-28 (MNAELRGEDKAA) has biased composition (basic and acidic residues). 2 stretches are compositionally biased toward low complexity: residues 188–197 (QQQQQQQQQQ) and 206–216 (QHPQPASQAPP). Positions 217 to 237 (QSQPTPPHQPPPASQQLPAPP) are enriched in pro residues. The span at 238-272 (AQLEQATQPQQHQPHSHPQNQTQNQPSPTQQSSSP) shows a compositional bias: low complexity. The segment covering 437-447 (AATSHSPVRQA) has biased composition (polar residues). The segment covering 448–458 (SSSSSSSSSSS) has biased composition (low complexity). The POU-specific domain maps to 476–586 (VDGVNLEEIR…VLERWMAEAE (111 aa)). The homeobox DNA-binding region spans 607–666 (KRKRRTSFTPQALEILNAHFEKNTHPSGQEMTEIAEKLNYDREVVRVWFCNKRQALKNTI). The interval 670–691 (KQHEPTSAAPLEPLADSPEENC) is disordered.

Belongs to the POU transcription factor family. Class-6 subfamily. In terms of tissue distribution, expressed in kidney, heart, muscle, spleen and ovary, but not in lung.

It localises to the nucleus. Its function is as follows. Probable transcription factor likely to be involved in early steps in the differentiation of amacrine and ganglion cells. Recognizes and binds to the DNA sequence 5'-ATGCAAAT-3'. This chain is POU domain, class 6, transcription factor 2 (Pou6f2), found in Mus musculus (Mouse).